The sequence spans 301 residues: 4-diphosphocytidyl-2-C-methyl-D-erythritol kinase (301 aa).

The active site involves K10. Position 96 to 106 (96 to 106) interacts with ATP; it reads PMGGGVGGGSS. The active site involves D138.

This sequence belongs to the GHMP kinase family. IspE subfamily.

The enzyme catalyses 4-CDP-2-C-methyl-D-erythritol + ATP = 4-CDP-2-C-methyl-D-erythritol 2-phosphate + ADP + H(+). The protein operates within isoprenoid biosynthesis; isopentenyl diphosphate biosynthesis via DXP pathway; isopentenyl diphosphate from 1-deoxy-D-xylulose 5-phosphate: step 3/6. Functionally, catalyzes the phosphorylation of the position 2 hydroxy group of 4-diphosphocytidyl-2C-methyl-D-erythritol. In Alcanivorax borkumensis (strain ATCC 700651 / DSM 11573 / NCIMB 13689 / SK2), this protein is 4-diphosphocytidyl-2-C-methyl-D-erythritol kinase.